The sequence spans 311 residues: Ribonuclease Z (311 aa).

7 residues coordinate Zn(2+): His61, His63, Asp65, His66, His137, Asp207, and His263. The Proton acceptor role is filled by Asp65.

Belongs to the RNase Z family. Homodimer. Zn(2+) serves as cofactor.

The catalysed reaction is Endonucleolytic cleavage of RNA, removing extra 3' nucleotides from tRNA precursor, generating 3' termini of tRNAs. A 3'-hydroxy group is left at the tRNA terminus and a 5'-phosphoryl group is left at the trailer molecule.. Its function is as follows. Zinc phosphodiesterase, which displays some tRNA 3'-processing endonuclease activity. Probably involved in tRNA maturation, by removing a 3'-trailer from precursor tRNA. The protein is Ribonuclease Z of Thermococcus onnurineus (strain NA1).